A 576-amino-acid chain; its full sequence is Low-affinity glucose transporter HXT4 (576 aa).

Residues 1-56 (MSEEAAYQEDTAVQNTPADALSPVESDSNSALSTPSNKAERDDMKDFDENHEESNN) are disordered. Residues 1 to 66 (MSEEAAYQED…YVEIPKKPAS (66 aa)) lie on the Cytoplasmic side of the membrane. Over residues 25 to 37 (ESDSNSALSTPSN) the composition is skewed to polar residues. Over residues 38-54 (KAERDDMKDFDENHEES) the composition is skewed to basic and acidic residues. Residue K45 forms a Glycyl lysine isopeptide (Lys-Gly) (interchain with G-Cter in ubiquitin) linkage. Residues 67–87 (AYVTVSICCLMVAFGGFVFGW) traverse the membrane as a helical segment. The Extracellular segment spans residues 88 to 122 (DTGTISGFVAQTDFIRRFGMKHHDGTYYLSKVRTG). Residues 123-143 (LMVSIINIGCAIGGIILAKLG) traverse the membrane as a helical segment. Topologically, residues 144–149 (DMYGRK) are cytoplasmic. The chain crosses the membrane as a helical span at residues 150-170 (MGLIVVVVIYIIGIIIQIASI). Residues 171–180 (NKWYQYFIGR) lie on the Extracellular side of the membrane. The helical transmembrane segment at 181–201 (IISGLGVGGIAVLSPMLISEV) threads the bilayer. At 202-207 (SPKHIR) the chain is on the cytoplasmic side. Residues 208–228 (GTLVSCYQLMITLGIFLGYCT) traverse the membrane as a helical segment. Residues 229–242 (NYGTKTYTNSVQWR) are Extracellular-facing. Residues 243–263 (VPLGLGFAWALFMIGGMTFVP) traverse the membrane as a helical segment. Over 264-346 (ESPRYLVEVG…IQSLQQLTGD (83 aa)) the chain is Cytoplasmic. A helical membrane pass occupies residues 347–363 (NYFFYYGTTVFTAVGLS). Over 364–369 (DSFETS) the chain is Extracellular. Residues 370-387 (IVLGIVNFASTFVGIFLV) form a helical membrane-spanning segment. Over 388–394 (ERYGRRR) the chain is Cytoplasmic. A helical transmembrane segment spans residues 395 to 415 (CLLWGAASMTACMVVFASVGV). Residues 416-437 (TRLWPNGKKNGSSKGAGNCMIV) lie on the Extracellular side of the membrane. N-linked (GlcNAc...) asparagine glycosylation is present at N425. Residues 438–458 (FTCFYLFCFATTWAPIPFVVN) form a helical membrane-spanning segment. At 459-475 (SETFPLRVKSKCMAIAQ) the chain is on the cytoplasmic side. The chain crosses the membrane as a helical span at residues 476-496 (ACNWIWGFLIGFFTPFISNAI). Position 497 (D497) is a topological domain, extracellular. The helical transmembrane segment at 498-518 (FYYGYVFMGCLVFSYFYVFFF) threads the bilayer. At 519 to 576 (VPETKGLTLEEVNTLWEEGVLPWKSPSWVPPNKRGTDYNADDLMHDDQPFYKKMFGKK) the chain is on the cytoplasmic side.

It belongs to the major facilitator superfamily. Sugar transporter (TC 2.A.1.1) family.

Its subcellular location is the cell membrane. Its activity is regulated as follows. Xylose uptake is strongly inhibited by glucose. Low-affinity glucose transporter. Can also transport xylose. In Saccharomyces cerevisiae (strain JAY291) (Baker's yeast), this protein is Low-affinity glucose transporter HXT4 (HXT4).